Consider the following 99-residue polypeptide: DNA/RNA-binding protein Alba 1 (99 aa).

At Lys17 the chain carries N6-acetyllysine.

The protein belongs to the histone-like Alba family. Acetylated. Acetylation at Lys-17 decreases DNA-binding affinity.

It localises to the cytoplasm. It is found in the chromosome. Its function is as follows. Binds double-stranded DNA tightly but without sequence specificity. Involved in DNA compaction. This Sulfurisphaera tokodaii (strain DSM 16993 / JCM 10545 / NBRC 100140 / 7) (Sulfolobus tokodaii) protein is DNA/RNA-binding protein Alba 1.